The sequence spans 312 residues: Protoheme IX farnesyltransferase (312 aa).

Helical transmembrane passes span 31–51 (VMSL…GSFH), 52–72 (PVLA…AGAL), 119–139 (ILVN…YVVI), 152–172 (IVIG…SVTG), 179–199 (ILLF…LALF), 225–245 (ILLY…LGYF), 247–267 (VIYG…AVRV), and 288–308 (ILYL…AAVL).

It belongs to the UbiA prenyltransferase family. Protoheme IX farnesyltransferase subfamily.

The protein localises to the cell inner membrane. It catalyses the reaction heme b + (2E,6E)-farnesyl diphosphate + H2O = Fe(II)-heme o + diphosphate. It functions in the pathway porphyrin-containing compound metabolism; heme O biosynthesis; heme O from protoheme: step 1/1. Functionally, converts heme B (protoheme IX) to heme O by substitution of the vinyl group on carbon 2 of heme B porphyrin ring with a hydroxyethyl farnesyl side group. The sequence is that of Protoheme IX farnesyltransferase from Rhodopseudomonas palustris (strain ATCC BAA-98 / CGA009).